The following is a 651-amino-acid chain: Histone-lysine N-methyltransferase family member SUVH2 (651 aa).

Positions 1-28 (MSTLLPFPDLNLMPDSQSSTAGTTAGDT) are disordered. Over residues 15 to 28 (DSQSSTAGTTAGDT) the composition is skewed to low complexity. The 157-residue stretch at 202 to 358 (DKHIVGPVTG…KFRLVRIEGQ (157 aa)) folds into the YDG domain. Residues 434-492 (TGCECKLSCTDDCLCARKNGGEFAYDDNGHLLKGKHVVFECGEFCTCGPSCKSRVTQKG) enclose the Pre-SET domain. Positions 436, 438, 442, 446, 448, 474, 478, 480, and 484 each coordinate Zn(2+). Residues 495–638 (NRLEVFRSKE…PLAELSLDYG (144 aa)) form the SET domain.

It belongs to the class V-like SAM-binding methyltransferase superfamily. Histone-lysine methyltransferase family. Suvar3-9 subfamily. As to quaternary structure, self-interacts. Interacts with DNA-directed RNA polymerase V subunit NRPE1 and with DRD1 and DMS3. Binds to MORC1/CRT1. Expressed at low levels in leaves stems and flowers.

Its subcellular location is the nucleus. It is found in the chromosome. The protein resides in the centromere. Functionally, histone methyltransferase family member that plays a central role in gene silencing. Together with MORC6 and SUVH9, regulates the silencing of some transposable elements (TEs). According to PubMed:15775980, it is required for normal methylation of 'Lys-9' and 'Lys-27' of histone H3, 'Lys-20' of H4, and cytosine, but PubMed:19043555 see no significant effect on histone methylation when the gene is mutated. According to PubMed:19043555, the protein does not bind S-adenosyl-L-methionine and lacks methyltransferase activity. Instead, it may function downstream of DRM2 in RNA-directed DNA methylation, binding to methylated DNA and recruiting DNA-directed RNA polymerase V to chromatin. This Arabidopsis thaliana (Mouse-ear cress) protein is Histone-lysine N-methyltransferase family member SUVH2 (SUVH2).